A 338-amino-acid chain; its full sequence is Mycothiol acetyltransferase (338 aa).

N-acetyltransferase domains lie at proline 29–proline 173 and isoleucine 181–glutamine 338. Position 55 (aspartate 55) interacts with 1D-myo-inositol 2-(L-cysteinylamino)-2-deoxy-alpha-D-glucopyranoside. Residue leucine 105 to valine 107 coordinates acetyl-CoA. The 1D-myo-inositol 2-(L-cysteinylamino)-2-deoxy-alpha-D-glucopyranoside site is built by glutamate 208, lysine 248, and glutamate 261. Acetyl-CoA-binding positions include valine 265–isoleucine 267 and glutamine 272–lysine 278. Tyrosine 299 is a 1D-myo-inositol 2-(L-cysteinylamino)-2-deoxy-alpha-D-glucopyranoside binding site.

This sequence belongs to the acetyltransferase family. MshD subfamily. Monomer.

It carries out the reaction 1D-myo-inositol 2-(L-cysteinylamino)-2-deoxy-alpha-D-glucopyranoside + acetyl-CoA = mycothiol + CoA + H(+). Functionally, catalyzes the transfer of acetyl from acetyl-CoA to desacetylmycothiol (Cys-GlcN-Ins) to form mycothiol. This chain is Mycothiol acetyltransferase, found in Renibacterium salmoninarum (strain ATCC 33209 / DSM 20767 / JCM 11484 / NBRC 15589 / NCIMB 2235).